The primary structure comprises 192 residues: 7-methyl-GTP pyrophosphatase (192 aa).

The Proton acceptor role is filled by Asp-69.

Belongs to the Maf family. YceF subfamily. A divalent metal cation is required as a cofactor.

Its subcellular location is the cytoplasm. The enzyme catalyses N(7)-methyl-GTP + H2O = N(7)-methyl-GMP + diphosphate + H(+). In terms of biological role, nucleoside triphosphate pyrophosphatase that hydrolyzes 7-methyl-GTP (m(7)GTP). May have a dual role in cell division arrest and in preventing the incorporation of modified nucleotides into cellular nucleic acids. This Pseudomonas savastanoi pv. phaseolicola (strain 1448A / Race 6) (Pseudomonas syringae pv. phaseolicola (strain 1448A / Race 6)) protein is 7-methyl-GTP pyrophosphatase.